The chain runs to 248 residues: 3-deoxy-manno-octulosonate cytidylyltransferase (248 aa).

This sequence belongs to the KdsB family.

It localises to the cytoplasm. It catalyses the reaction 3-deoxy-alpha-D-manno-oct-2-ulosonate + CTP = CMP-3-deoxy-beta-D-manno-octulosonate + diphosphate. Its pathway is nucleotide-sugar biosynthesis; CMP-3-deoxy-D-manno-octulosonate biosynthesis; CMP-3-deoxy-D-manno-octulosonate from 3-deoxy-D-manno-octulosonate and CTP: step 1/1. The protein operates within bacterial outer membrane biogenesis; lipopolysaccharide biosynthesis. In terms of biological role, activates KDO (a required 8-carbon sugar) for incorporation into bacterial lipopolysaccharide in Gram-negative bacteria. The polypeptide is 3-deoxy-manno-octulosonate cytidylyltransferase (Salmonella arizonae (strain ATCC BAA-731 / CDC346-86 / RSK2980)).